Reading from the N-terminus, the 324-residue chain is THUMP domain-containing protein 1 homolog (324 aa).

Disordered regions lie at residues 1-24 (MEPASKKSKMGKNVKFNNNKKKYF) and 67-104 (SEKPENEPEKKQPEEGAGGDAGEDDPKPAAGGTSDDDD). Residues 68–80 (EKPENEPEKKQPE) are compositionally biased toward basic and acidic residues. At T99 the chain carries Phosphothreonine. S100 carries the phosphoserine modification. The THUMP domain maps to 154 to 260 (DIATTGKSMS…RGWCLLSVID (107 aa)). The interval 275–324 (NPSDKKSSGEGDSKSETSEVANGNDKEQAESSEESKSNDDENKDSTENDK) is disordered. Composition is skewed to basic and acidic residues over residues 277–291 (SDKKSSGEGDSKSET) and 298–324 (NDKEQAESSEESKSNDDENKDSTENDK).

Belongs to the THUMPD1 family.

In Drosophila melanogaster (Fruit fly), this protein is THUMP domain-containing protein 1 homolog.